The primary structure comprises 121 residues: Small ribosomal subunit protein uS13 (121 aa).

Residues 94-121 are disordered; the sequence is GLPMRGQRTRTNARTRKGPRKAAAALKK.

The protein belongs to the universal ribosomal protein uS13 family. Part of the 30S ribosomal subunit. Forms a loose heterodimer with protein S19. Forms two bridges to the 50S subunit in the 70S ribosome.

Functionally, located at the top of the head of the 30S subunit, it contacts several helices of the 16S rRNA. In the 70S ribosome it contacts the 23S rRNA (bridge B1a) and protein L5 of the 50S subunit (bridge B1b), connecting the 2 subunits; these bridges are implicated in subunit movement. Contacts the tRNAs in the A and P-sites. This chain is Small ribosomal subunit protein uS13, found in Polaromonas sp. (strain JS666 / ATCC BAA-500).